Reading from the N-terminus, the 113-residue chain is Large ribosomal subunit protein bL19 (113 aa).

The protein belongs to the bacterial ribosomal protein bL19 family.

In terms of biological role, this protein is located at the 30S-50S ribosomal subunit interface and may play a role in the structure and function of the aminoacyl-tRNA binding site. The polypeptide is Large ribosomal subunit protein bL19 (Mycolicibacterium vanbaalenii (strain DSM 7251 / JCM 13017 / BCRC 16820 / KCTC 9966 / NRRL B-24157 / PYR-1) (Mycobacterium vanbaalenii)).